Here is a 284-residue protein sequence, read N- to C-terminus: MSYPLHLFWHRRDLRLADNLGLYAARQHTPTVVGVFCFDPALLQGQDVAAVRVAYLLGCLQALKEAYQQRGGCLLMVQGDPRQVIPEVATTLKATAVHWHEDVEPYARERDRVVAATLNDLGIAVHRQWDQLLHPPSAVQTQQGQPYTVYTPFWRNWSALPKAAPVPPPPDFAPLEATEIASIPLPSTHDLGFDWSGELILAPGEAAAAQQLAHFSQHAIYEYGEQRNYPGRPGTALLSPALKFGVIGIRTVWAASEAALEHARSDEARASIRTWQQELAWREF.

Positions 4–133 (PLHLFWHRRD…AVHRQWDQLL (130 aa)) constitute a Photolyase/cryptochrome alpha/beta domain.

This is an uncharacterized protein from Synechococcus sp. (strain PCC 6716).